Here is a 274-residue protein sequence, read N- to C-terminus: Transcription factor MYB32 (274 aa).

HTH myb-type domains follow at residues 9-61 (KDHT…INYL) and 62-116 (RPDL…KRKL). 2 DNA-binding regions (H-T-H motif) span residues 37 to 61 (WRSLPRSAGLQRCGKSCRLRWINYL) and 89 to 112 (WSLIATRLPGRTDNEIKNYWNTHV). Residues 123 to 144 (PATHRPINETKTSQDSSDSSKT) form a disordered region.

As to expression, mostly expressed in roots, and, to a lower extent, in stems, flower buds, and siliques.

It localises to the nucleus. The protein is Transcription factor MYB32 (MYB32) of Arabidopsis thaliana (Mouse-ear cress).